We begin with the raw amino-acid sequence, 108 residues long: N(4)-acetylcytidine amidohydrolase (108 aa).

In terms of domain architecture, ASCH spans 5 to 102; the sequence is ITFFQRLERS…NDLFFISFRV (98 aa). Lys20 (proton acceptor) is an active-site residue. Thr23 functions as the Nucleophile in the catalytic mechanism. Glu73 acts as the Proton donor in catalysis.

This sequence belongs to the N(4)-acetylcytidine amidohydrolase family.

The enzyme catalyses N(4)-acetylcytidine + H2O = cytidine + acetate + H(+). The catalysed reaction is N(4)-acetyl-2'-deoxycytidine + H2O = 2'-deoxycytidine + acetate + H(+). It carries out the reaction N(4)-acetylcytosine + H2O = cytosine + acetate + H(+). Its function is as follows. Catalyzes the hydrolysis of N(4)-acetylcytidine (ac4C). The sequence is that of N(4)-acetylcytidine amidohydrolase from Moritella marina (Vibrio marinus).